The primary structure comprises 301 residues: Bifunctional dTDP-4-dehydrorhamnose 3,5-epimerase/dTDP-4-dehydrorhamnose reductase (301 aa).

NADPH contacts are provided by residues 23 to 24 (WI), 69 to 71 (GVT), and Tyr-111.

It belongs to the dTDP-4-dehydrorhamnose reductase family. As to expression, expressed in roots, leaves, stems and flowers.

It carries out the reaction dTDP-4-dehydro-6-deoxy-alpha-D-glucose = dTDP-4-dehydro-beta-L-rhamnose. It catalyses the reaction dTDP-beta-L-rhamnose + NADP(+) = dTDP-4-dehydro-beta-L-rhamnose + NADPH + H(+). Its pathway is carbohydrate biosynthesis; dTDP-L-rhamnose biosynthesis. In terms of biological role, bifunctional enzyme involved in dTDP-beta-L-rhamnose biosynthesis. Catalyzes the epimerization of the C3' and C5'positions of dTDP-6-deoxy-4-keto-alpha-D-glucose to form dTDP-4-keto-beta-L-rhamnose and its reduction to yield dTDP-beta-L-rhamnose. Can form UDP-beta-L-rhamnose from UDP-6-deoxy-4-keto-alpha-D-glucose, but cannot convert GDP-4-dehydro-6-deoxy-D-mannose to GDP-fucose. In Arabidopsis thaliana (Mouse-ear cress), this protein is Bifunctional dTDP-4-dehydrorhamnose 3,5-epimerase/dTDP-4-dehydrorhamnose reductase.